A 302-amino-acid polypeptide reads, in one-letter code: Cell division protein FtsQ (302 aa).

Over 1–43 (MRPVDKKPVDRKIERETRYLRRDPAPSRWSYRYQRLMLTPAFR) the chain is Cytoplasmic. A helical membrane pass occupies residues 44-64 (AGVRLGTPVIIIALAVAVVFG). Over 65–302 (RADSRDWIMG…SMPGRSAGRG (238 aa)) the chain is Periplasmic. Residues 89–156 (FMVGSFAITG…GVLQIVIEER (68 aa)) form the POTRA domain.

Belongs to the FtsQ/DivIB family. FtsQ subfamily.

Its subcellular location is the cell inner membrane. Essential cell division protein. The polypeptide is Cell division protein FtsQ (Ketogulonicigenium vulgare (strain Y25)).